The following is a 36-amino-acid chain: GLFIIDDKQITMNDLPVGRSVDETLRLVQAFQYTDK.

It belongs to the peroxiredoxin family. AhpC/Prx1 subfamily. As to quaternary structure, homodimer; disulfide-linked, upon oxidation. As to expression, venom gland.

The protein resides in the secreted. It carries out the reaction a hydroperoxide + [thioredoxin]-dithiol = an alcohol + [thioredoxin]-disulfide + H2O. Venom peroxiredoxin enzyme that may play a role as part of a redox pathway leading to the structural/functional diversification of toxins through a disulfide bond engineering mechanism. The sequence is that of Peroxiredoxin-4 from Crotalus atrox (Western diamondback rattlesnake).